A 311-amino-acid chain; its full sequence is Formimidoylglutamase (311 aa).

Mn(2+) contacts are provided by histidine 130, aspartate 155, histidine 157, aspartate 159, cysteine 242, and aspartate 244.

This sequence belongs to the arginase family. Requires Mn(2+) as cofactor.

The enzyme catalyses N-formimidoyl-L-glutamate + H2O = formamide + L-glutamate. It participates in amino-acid degradation; L-histidine degradation into L-glutamate; L-glutamate from N-formimidoyl-L-glutamate (hydrolase route): step 1/1. Functionally, catalyzes the conversion of N-formimidoyl-L-glutamate to L-glutamate and formamide. The sequence is that of Formimidoylglutamase from Staphylococcus aureus (strain Mu3 / ATCC 700698).